The sequence spans 472 residues: Endoplasmic reticulum oxidoreductin-2 (472 aa).

Positions 1–37 (MAETDVGSVKGKEKGSGKRWILLIGAIAAVLLAVVVA) are cleaved as a signal peptide. An N-linked (GlcNAc...) asparagine glycan is attached at Asn44. Cystine bridges form between Cys55/Cys74, Cys57/Cys72, Cys111/Cys371, Cys120/Cys125, Cys221/Cys230, and Cys374/Cys377. FAD is bound by residues Arg200, Thr202, and Trp213. The FAD site is built by Ser241 and His244. A glycan (N-linked (GlcNAc...) asparagine) is linked at Asn267. FAD is bound by residues Arg274 and Arg281. A glycan (N-linked (GlcNAc...) asparagine) is linked at Asn364.

The protein belongs to the EROs family. May function both as a monomer and a homodimer. The cofactor is FAD. In terms of processing, N-glycosylated.

The protein localises to the endoplasmic reticulum membrane. Its function is as follows. Essential oxidoreductase that oxidizes proteins in the endoplasmic reticulum to produce disulfide bonds. Acts by oxidizing directly PDI isomerase through a direct disulfide exchange. Does not act as a direct oxidant of folding substrate, but relies on PDI to transfer oxidizing equivalent. Does not oxidize all PDI related proteins, suggesting that it can discriminate between PDI and related proteins. Its reoxidation probably involves electron transfer to molecular oxygen via FAD. Acts independently of glutathione. May be responsible for a significant proportion of reactive oxygen species (ROS) in the cell, thereby being a source of oxidative stress. The sequence is that of Endoplasmic reticulum oxidoreductin-2 (AERO2) from Arabidopsis thaliana (Mouse-ear cress).